Here is an 86-residue protein sequence, read N- to C-terminus: Dolichyl-diphosphooligosaccharide--protein glycosyltransferase subunit OST5 (86 aa).

The Lumenal segment spans residues 2-27; that stretch reads TYEQLYKEFHSSKSFQPFIHLDTQPK. The chain crosses the membrane as a helical span at residues 28 to 48; that stretch reads FAICGLIVTLAVLSSALFAVG. Over 49 to 56 the chain is Cytoplasmic; it reads SKSSYIKK. A helical transmembrane segment spans residues 57 to 77; it reads LFFYTILSVIGSLFAGLTTVF. The Lumenal portion of the chain corresponds to 78–86; that stretch reads ASNSFGVYV.

It belongs to the OST5 family. In terms of assembly, component of the oligosaccharyltransferase (OST) complex, which appears to exist in two assemblies comprising OST1, OST2, OST4, OST5, STT3, SWP1, WPB1, and either OST3 or OST6. OST assembly occurs through the formation of 3 subcomplexes. Subcomplex 1 contains OST1 and OST5, subcomplex 2 contains STT3, OST3, and OST4, and subcomplex 3 contains OST2, WBP1, and SWP1.

It is found in the endoplasmic reticulum membrane. It participates in protein modification; protein glycosylation. Its function is as follows. Subunit of the oligosaccharyl transferase (OST) complex that catalyzes the initial transfer of a defined glycan (Glc(3)Man(9)GlcNAc(2) in eukaryotes) from the lipid carrier dolichol-pyrophosphate to an asparagine residue within an Asn-X-Ser/Thr consensus motif in nascent polypeptide chains, the first step in protein N-glycosylation. N-glycosylation occurs cotranslationally and the complex associates with the Sec61 complex at the channel-forming translocon complex that mediates protein translocation across the endoplasmic reticulum (ER). All subunits are required for a maximal enzyme activity. This Saccharomyces cerevisiae (strain ATCC 204508 / S288c) (Baker's yeast) protein is Dolichyl-diphosphooligosaccharide--protein glycosyltransferase subunit OST5 (OST5).